Reading from the N-terminus, the 425-residue chain is Kynureninase (425 aa).

Residues L105, T106, 133–136 (FPSD), D218, H221, and Y243 each bind pyridoxal 5'-phosphate. K244 carries the post-translational modification N6-(pyridoxal phosphate)lysine. Positions 274 and 302 each coordinate pyridoxal 5'-phosphate.

It belongs to the kynureninase family. Homodimer. Requires pyridoxal 5'-phosphate as cofactor.

The enzyme catalyses L-kynurenine + H2O = anthranilate + L-alanine + H(+). It carries out the reaction 3-hydroxy-L-kynurenine + H2O = 3-hydroxyanthranilate + L-alanine + H(+). The protein operates within amino-acid degradation; L-kynurenine degradation; L-alanine and anthranilate from L-kynurenine: step 1/1. It functions in the pathway cofactor biosynthesis; NAD(+) biosynthesis; quinolinate from L-kynurenine: step 2/3. In terms of biological role, catalyzes the cleavage of L-kynurenine (L-Kyn) and L-3-hydroxykynurenine (L-3OHKyn) into anthranilic acid (AA) and 3-hydroxyanthranilic acid (3-OHAA), respectively. The polypeptide is Kynureninase (Christiangramia forsetii (strain DSM 17595 / CGMCC 1.15422 / KT0803) (Gramella forsetii)).